A 501-amino-acid chain; its full sequence is Aldehyde dehydrogenase family 2 member C4 (501 aa).

Residue 245–250 (GSTDVG) coordinates NAD(+). Glu-268 serves as the catalytic Proton acceptor. Cys-302 serves as the catalytic Nucleophile.

It belongs to the aldehyde dehydrogenase family. Homotetramer.

It localises to the cytoplasm. The protein localises to the cytosol. It catalyses the reaction an aldehyde + NAD(+) + H2O = a carboxylate + NADH + 2 H(+). Functionally, involved in ferulic acid and sinapic acid biosynthesis by oxidation of conyferylaldehyde and sinapaldehyde, respectively. Can oxidize L-lactaldehyde. Possesses activity on acetaldehyde and glycolaldehyde in vitro. The polypeptide is Aldehyde dehydrogenase family 2 member C4 (ALDH2C4) (Arabidopsis thaliana (Mouse-ear cress)).